The sequence spans 196 residues: Glycerol-3-phosphate acyltransferase (196 aa).

4 consecutive transmembrane segments (helical) span residues 4-24, 70-90, 111-131, and 152-172; these read IYIA…GLIL, VLIA…LGAF, IGVL…LWLA, and IFLW…LTLL.

It belongs to the PlsY family. As to quaternary structure, probably interacts with PlsX.

It is found in the cell inner membrane. It carries out the reaction an acyl phosphate + sn-glycerol 3-phosphate = a 1-acyl-sn-glycero-3-phosphate + phosphate. It functions in the pathway lipid metabolism; phospholipid metabolism. Functionally, catalyzes the transfer of an acyl group from acyl-phosphate (acyl-PO(4)) to glycerol-3-phosphate (G3P) to form lysophosphatidic acid (LPA). This enzyme utilizes acyl-phosphate as fatty acyl donor, but not acyl-CoA or acyl-ACP. The polypeptide is Glycerol-3-phosphate acyltransferase (Rhodopseudomonas palustris (strain BisB5)).